The primary structure comprises 525 residues: GMP synthase [glutamine-hydrolyzing] (525 aa).

Residues Arg-9–Leu-207 form the Glutamine amidotransferase type-1 domain. Cys-86 acts as the Nucleophile in catalysis. Active-site residues include His-181 and Glu-183. The GMPS ATP-PPase domain maps to Trp-208–Arg-400. An ATP-binding site is contributed by Ser-235–Ser-241.

In terms of assembly, homodimer.

It catalyses the reaction XMP + L-glutamine + ATP + H2O = GMP + L-glutamate + AMP + diphosphate + 2 H(+). It participates in purine metabolism; GMP biosynthesis; GMP from XMP (L-Gln route): step 1/1. Catalyzes the synthesis of GMP from XMP. In Enterobacter sp. (strain 638), this protein is GMP synthase [glutamine-hydrolyzing].